A 230-amino-acid chain; its full sequence is Orotidine 5'-phosphate decarboxylase (230 aa).

Residues Asp10, Lys31, 58–67 (DLKLHDIPNT), Thr117, Arg179, Gln188, Gly208, and Arg209 contribute to the substrate site. Lys60 acts as the Proton donor in catalysis.

The protein belongs to the OMP decarboxylase family. Type 1 subfamily. Homodimer.

It carries out the reaction orotidine 5'-phosphate + H(+) = UMP + CO2. It functions in the pathway pyrimidine metabolism; UMP biosynthesis via de novo pathway; UMP from orotate: step 2/2. Functionally, catalyzes the decarboxylation of orotidine 5'-monophosphate (OMP) to uridine 5'-monophosphate (UMP). The protein is Orotidine 5'-phosphate decarboxylase of Staphylococcus epidermidis (strain ATCC 12228 / FDA PCI 1200).